A 66-amino-acid polypeptide reads, in one-letter code: Large ribosomal subunit protein bL35 (66 aa).

A compositionally biased stretch (basic residues) spans 1-26 (MPKMKTHRGSAKRFKKTASGKLKRGH). A disordered region spans residues 1 to 28 (MPKMKTHRGSAKRFKKTASGKLKRGHAY).

It belongs to the bacterial ribosomal protein bL35 family.

The chain is Large ribosomal subunit protein bL35 from Geobacillus thermodenitrificans (strain NG80-2).